Reading from the N-terminus, the 378-residue chain is Phosphoglycerate kinase (378 aa).

(2R)-3-phosphoglycerate contacts are provided by Val-1, Asp-2, Phe-3, Asn-4, Asn-16, Arg-17, Ser-40, His-41, Gly-43, Arg-44, Leu-99, Arg-100, His-147, and Arg-148. Gly-191 contacts ADP. Gly-191 is a CDP binding site. AMP is bound by residues Ala-192 and Lys-193. An ATP-binding site is contributed by Ala-192. Ala-192 contacts Mg(2+). Residue Asp-196 coordinates CDP. A Mg(2+)-binding site is contributed by Asp-196. Residue Lys-197 coordinates AMP. Lys-197 is an ATP binding site. ADP is bound at residue Gly-215. CDP is bound at residue Gly-215. Positions 216 and 288 each coordinate AMP. 2 residues coordinate ATP: Gly-216 and Gly-288. CDP-binding residues include Gly-313 and Phe-318. Phe-318 lines the ADP pocket. Position 319 (Glu-319) interacts with AMP. ATP-binding residues include Glu-319, Asp-351, and Thr-352. Asp-351 contacts Mg(2+).

Belongs to the phosphoglycerate kinase family. As to quaternary structure, monomer. The cofactor is Mg(2+).

The enzyme catalyses (2R)-3-phosphoglycerate + ATP = (2R)-3-phospho-glyceroyl phosphate + ADP. Its pathway is carbohydrate degradation; glycolysis; pyruvate from D-glyceraldehyde 3-phosphate: step 2/5. The sequence is that of Phosphoglycerate kinase (PGK) from Condylostoma magnum.